Reading from the N-terminus, the 558-residue chain is Glucose-6-phosphate isomerase (558 aa).

The residue at position 2 (A2) is an N-acetylalanine. K12 carries the post-translational modification N6-acetyllysine. K34 is subject to N6-(2-hydroxyisobutyryl)lysine. S107 carries the post-translational modification Phosphoserine. Residue T109 is modified to Phosphothreonine. K142 carries the post-translational modification N6-acetyllysine. Residue 159–160 coordinates D-glucose 6-phosphate; that stretch reads GS. The residue at position 185 (S185) is a Phosphoserine; by CK2. 210-215 is a binding site for D-glucose 6-phosphate; that stretch reads SKTFTT. T250 bears the Phosphothreonine mark. Q354, E358, and H389 together coordinate D-glucose 6-phosphate. Residue E358 is the Proton donor of the active site. H389 is a catalytic residue. The residue at position 454 (K454) is an N6-acetyllysine; alternate. K454 carries the N6-malonyllysine; alternate modification. K454 bears the N6-succinyllysine; alternate mark. S455 bears the Phosphoserine mark. Position 519 (K519) interacts with D-glucose 6-phosphate. K519 is a catalytic residue.

This sequence belongs to the GPI family. As to quaternary structure, homodimer; in the catalytically active form. Monomer in the secreted form. Phosphorylation at Ser-185 by CK2 has been shown to decrease enzymatic activity and may contribute to secretion by a non-classical secretory pathway. In terms of processing, ISGylated.

The protein resides in the cytoplasm. Its subcellular location is the secreted. The catalysed reaction is alpha-D-glucose 6-phosphate = beta-D-fructose 6-phosphate. It participates in carbohydrate degradation; glycolysis; D-glyceraldehyde 3-phosphate and glycerone phosphate from D-glucose: step 2/4. Functionally, in the cytoplasm, catalyzes the conversion of glucose-6-phosphate to fructose-6-phosphate, the second step in glycolysis, and the reverse reaction during gluconeogenesis. Besides it's role as a glycolytic enzyme, also acts as a secreted cytokine: acts as an angiogenic factor (AMF) that stimulates endothelial cell motility. Acts as a neurotrophic factor, neuroleukin, for spinal and sensory neurons. It is secreted by lectin-stimulated T-cells and induces immunoglobulin secretion. The sequence is that of Glucose-6-phosphate isomerase from Pongo abelii (Sumatran orangutan).